We begin with the raw amino-acid sequence, 261 residues long: 1-(5-phosphoribosyl)-5-[(5-phosphoribosylamino)methylideneamino] imidazole-4-carboxamide isomerase (261 aa).

Aspartate 7 acts as the Proton acceptor in catalysis. Aspartate 129 serves as the catalytic Proton donor.

Belongs to the HisA/HisF family.

The protein localises to the cytoplasm. The enzyme catalyses 1-(5-phospho-beta-D-ribosyl)-5-[(5-phospho-beta-D-ribosylamino)methylideneamino]imidazole-4-carboxamide = 5-[(5-phospho-1-deoxy-D-ribulos-1-ylimino)methylamino]-1-(5-phospho-beta-D-ribosyl)imidazole-4-carboxamide. Its pathway is amino-acid biosynthesis; L-histidine biosynthesis; L-histidine from 5-phospho-alpha-D-ribose 1-diphosphate: step 4/9. This is 1-(5-phosphoribosyl)-5-[(5-phosphoribosylamino)methylideneamino] imidazole-4-carboxamide isomerase from Colwellia psychrerythraea (strain 34H / ATCC BAA-681) (Vibrio psychroerythus).